Reading from the N-terminus, the 121-residue chain is Large ribosomal subunit protein uL14 (121 aa).

Belongs to the universal ribosomal protein uL14 family. Part of the 50S ribosomal subunit. Forms a cluster with proteins L3 and L19. In the 70S ribosome, L14 and L19 interact and together make contacts with the 16S rRNA in bridges B5 and B8.

In terms of biological role, binds to 23S rRNA. Forms part of two intersubunit bridges in the 70S ribosome. This Legionella pneumophila (strain Corby) protein is Large ribosomal subunit protein uL14.